We begin with the raw amino-acid sequence, 452 residues long: Biotin carboxylase (452 aa).

The Biotin carboxylation domain maps to 1-445 (MFKKVLIANR…TTAFVTNHLK (445 aa)). Residues Lys-116, Lys-158, 164–165 (GG), 200–203 (EKAV), His-208, and His-235 each bind ATP. Positions 120–317 (RTAMQTAGVP…LVEWQLLIAA (198 aa)) constitute an ATP-grasp domain. Residue Lys-237 participates in hydrogencarbonate binding. ATP is bound by residues Glu-275 and Glu-288. Residues Glu-275, Glu-288, and Asn-290 each coordinate Mg(2+). Positions 275, 288, and 290 each coordinate Mn(2+). Residues Arg-292, Val-295, and Arg-338 each contribute to the hydrogencarbonate site. Arg-292 is an active-site residue. Biotin is bound at residue Arg-338.

Acetyl-CoA carboxylase is a heterohexamer of biotin carboxyl carrier protein, biotin carboxylase and the two subunits of carboxyl transferase in a 2:2 complex. Mg(2+) is required as a cofactor. Mn(2+) serves as cofactor.

The enzyme catalyses N(6)-biotinyl-L-lysyl-[protein] + hydrogencarbonate + ATP = N(6)-carboxybiotinyl-L-lysyl-[protein] + ADP + phosphate + H(+). The protein operates within lipid metabolism; malonyl-CoA biosynthesis; malonyl-CoA from acetyl-CoA: step 1/1. Functionally, this protein is a component of the acetyl coenzyme A carboxylase complex; first, biotin carboxylase catalyzes the carboxylation of the carrier protein and then the transcarboxylase transfers the carboxyl group to form malonyl-CoA. In Halalkalibacterium halodurans (strain ATCC BAA-125 / DSM 18197 / FERM 7344 / JCM 9153 / C-125) (Bacillus halodurans), this protein is Biotin carboxylase (accC).